The sequence spans 373 residues: Spore germination protein A3 (373 aa).

The signal sequence occupies residues 1–17; it reads MKIRILCMFICTLLLSG. The N-palmitoyl cysteine moiety is linked to residue Cys18. The S-diacylglycerol cysteine moiety is linked to residue Cys18.

It belongs to the GerABKC lipoprotein family.

It is found in the cell membrane. Forms a complex at the inner spore membrane which acts as a receptor for L-alanine, thus is involved in the stimulation of germination in response to alanine. Can stimulate germination in the absence of GerD and GerK gene products (fructose and glucose receptors, respectively), but the response is improved in their presence. In Bacillus subtilis (strain 168), this protein is Spore germination protein A3 (gerAC).